We begin with the raw amino-acid sequence, 471 residues long: Methionine aminopeptidase 2 (471 aa).

Disordered stretches follow at residues 16 to 80 (VVDD…IDRF) and 92 to 139 (CEHP…DFNR). Residues 32-47 (EDGDDNDDAVNEGEAV) are compositionally biased toward acidic residues. Residues 52 to 65 (KKKKKKNKKKKKKG) show a composition bias toward basic residues. Over residues 119–139 (AEERAKDDAKHGSDDPLDFNR) the composition is skewed to basic and acidic residues. H224 is a binding site for substrate. A divalent metal cation contacts are provided by D244, D255, and H324. H332 serves as a coordination point for substrate. A divalent metal cation is bound by residues E357 and E452.

Belongs to the peptidase M24A family. Methionine aminopeptidase eukaryotic type 2 subfamily. Requires Co(2+) as cofactor. Zn(2+) is required as a cofactor. The cofactor is Mn(2+). It depends on Fe(2+) as a cofactor.

The protein localises to the cytoplasm. The catalysed reaction is Release of N-terminal amino acids, preferentially methionine, from peptides and arylamides.. In terms of biological role, cotranslationally removes the N-terminal methionine from nascent proteins. The N-terminal methionine is often cleaved when the second residue in the primary sequence is small and uncharged (Met-Ala-, Cys, Gly, Pro, Ser, Thr, or Val). This is Methionine aminopeptidase 2 from Yarrowia lipolytica (strain CLIB 122 / E 150) (Yeast).